The sequence spans 73 residues: MSDPCNCVETGDCRCADGSCSDCSNCKCGDSCKCSKPNCCGKNVTCKCGENCQCGVGCTGPDSCTCDSGCSCK.

The Cd(2+) site is built by cysteine 15, cysteine 20, cysteine 26, cysteine 28, cysteine 32, cysteine 34, cysteine 39, cysteine 46, cysteine 48, cysteine 52, cysteine 54, cysteine 58, cysteine 64, cysteine 66, cysteine 70, and cysteine 72.

It belongs to the metallothionein superfamily. Type 2 family.

In terms of biological role, the metallothioneins are involved in the cellular sequestration of toxic metal ions. The sequence is that of Metallothionein from Dreissena polymorpha (Zebra mussel).